The following is a 203-amino-acid chain: Ribosome maturation factor RimP (203 aa).

A disordered region spans residues 184 to 203 (RRGSAPVEDEEGEGEAPTAH).

This sequence belongs to the RimP family.

The protein resides in the cytoplasm. In terms of biological role, required for maturation of 30S ribosomal subunits. The sequence is that of Ribosome maturation factor RimP from Methylobacterium nodulans (strain LMG 21967 / CNCM I-2342 / ORS 2060).